A 691-amino-acid polypeptide reads, in one-letter code: DNA-directed RNA polymerase subunit beta' (691 aa).

It belongs to the RNA polymerase beta' chain family. RpoC1 subfamily. As to quaternary structure, in plastids the minimal PEP RNA polymerase catalytic core is composed of four subunits: alpha, beta, beta', and beta''. When a (nuclear-encoded) sigma factor is associated with the core the holoenzyme is formed, which can initiate transcription.

Its subcellular location is the plastid. It carries out the reaction RNA(n) + a ribonucleoside 5'-triphosphate = RNA(n+1) + diphosphate. In terms of biological role, DNA-dependent RNA polymerase catalyzes the transcription of DNA into RNA using the four ribonucleoside triphosphates as substrates. The sequence is that of DNA-directed RNA polymerase subunit beta' (rpoC1) from Cuscuta reflexa (Southern Asian dodder).